The primary structure comprises 686 residues: Soluble guanylate cyclase gcy-34 (686 aa).

Residue His-105 coordinates heme. Coiled-coil stretches lie at residues 306-335 (KKHM…ELTQ) and 398-432 (VEVN…LKDM). The Guanylate cyclase domain occupies 455-583 (TVMFCDLPAF…ETVTLASQME (129 aa)). 2 residues coordinate Mg(2+): Asp-460 and Asp-504.

The protein belongs to the adenylyl cyclase class-4/guanylyl cyclase family. In terms of assembly, heterodimer; with other soluble guanylate cyclases. Requires heme as cofactor. As to expression, expressed in a small number of neurons, corresponding to URX, AQR and PQR neurons.

The protein localises to the cytoplasm. The enzyme catalyses GTP = 3',5'-cyclic GMP + diphosphate. With respect to regulation, may be regulated by molecular oxygen. Probably not activated by nitric oxide (NO). Functionally, synthesizes cyclic GMP (cGMP) from GTP. May be involved in sensitivity to quinine by regulating egl-4 activity through the production of cGMP. In Caenorhabditis elegans, this protein is Soluble guanylate cyclase gcy-34 (gcy-34).